Consider the following 324-residue polypeptide: 4-hydroxy-3-methylbut-2-enyl diphosphate reductase (324 aa).

Cysteine 28 serves as a coordination point for [4Fe-4S] cluster. (2E)-4-hydroxy-3-methylbut-2-enyl diphosphate-binding residues include histidine 57 and histidine 90. Histidine 57 and histidine 90 together coordinate dimethylallyl diphosphate. 2 residues coordinate isopentenyl diphosphate: histidine 57 and histidine 90. A [4Fe-4S] cluster-binding site is contributed by cysteine 112. Residue histidine 140 participates in (2E)-4-hydroxy-3-methylbut-2-enyl diphosphate binding. Histidine 140 serves as a coordination point for dimethylallyl diphosphate. Histidine 140 serves as a coordination point for isopentenyl diphosphate. The active-site Proton donor is the glutamate 142. Residue threonine 180 participates in (2E)-4-hydroxy-3-methylbut-2-enyl diphosphate binding. Residue cysteine 210 coordinates [4Fe-4S] cluster. (2E)-4-hydroxy-3-methylbut-2-enyl diphosphate-binding residues include serine 238, serine 239, asparagine 240, and serine 282. Positions 238, 239, 240, and 282 each coordinate dimethylallyl diphosphate. Isopentenyl diphosphate-binding residues include serine 238, serine 239, asparagine 240, and serine 282.

The protein belongs to the IspH family. Requires [4Fe-4S] cluster as cofactor.

The catalysed reaction is isopentenyl diphosphate + 2 oxidized [2Fe-2S]-[ferredoxin] + H2O = (2E)-4-hydroxy-3-methylbut-2-enyl diphosphate + 2 reduced [2Fe-2S]-[ferredoxin] + 2 H(+). It catalyses the reaction dimethylallyl diphosphate + 2 oxidized [2Fe-2S]-[ferredoxin] + H2O = (2E)-4-hydroxy-3-methylbut-2-enyl diphosphate + 2 reduced [2Fe-2S]-[ferredoxin] + 2 H(+). The protein operates within isoprenoid biosynthesis; dimethylallyl diphosphate biosynthesis; dimethylallyl diphosphate from (2E)-4-hydroxy-3-methylbutenyl diphosphate: step 1/1. It functions in the pathway isoprenoid biosynthesis; isopentenyl diphosphate biosynthesis via DXP pathway; isopentenyl diphosphate from 1-deoxy-D-xylulose 5-phosphate: step 6/6. Functionally, catalyzes the conversion of 1-hydroxy-2-methyl-2-(E)-butenyl 4-diphosphate (HMBPP) into a mixture of isopentenyl diphosphate (IPP) and dimethylallyl diphosphate (DMAPP). Acts in the terminal step of the DOXP/MEP pathway for isoprenoid precursor biosynthesis. In Ralstonia nicotianae (strain ATCC BAA-1114 / GMI1000) (Ralstonia solanacearum), this protein is 4-hydroxy-3-methylbut-2-enyl diphosphate reductase.